The primary structure comprises 341 residues: Ribosomal RNA small subunit methyltransferase C (341 aa).

Belongs to the methyltransferase superfamily. RsmC family. As to quaternary structure, monomer.

It localises to the cytoplasm. The catalysed reaction is guanosine(1207) in 16S rRNA + S-adenosyl-L-methionine = N(2)-methylguanosine(1207) in 16S rRNA + S-adenosyl-L-homocysteine + H(+). Its function is as follows. Specifically methylates the guanine in position 1207 of 16S rRNA in the 30S particle. The protein is Ribosomal RNA small subunit methyltransferase C of Shewanella halifaxensis (strain HAW-EB4).